The sequence spans 150 residues: 3-hydroxyacyl-[acyl-carrier-protein] dehydratase FabZ (150 aa).

The active site involves H52.

This sequence belongs to the thioester dehydratase family. FabZ subfamily.

It is found in the cytoplasm. It carries out the reaction a (3R)-hydroxyacyl-[ACP] = a (2E)-enoyl-[ACP] + H2O. Its function is as follows. Involved in unsaturated fatty acids biosynthesis. Catalyzes the dehydration of short chain beta-hydroxyacyl-ACPs and long chain saturated and unsaturated beta-hydroxyacyl-ACPs. This Variovorax paradoxus (strain S110) protein is 3-hydroxyacyl-[acyl-carrier-protein] dehydratase FabZ.